The chain runs to 119 residues: Methylglyoxal synthase (119 aa).

The MGS-like domain maps to 1–119 (MRIALIAHDK…GTADLIIRQF (119 aa)). Substrate contacts are provided by residues His8, Lys12, 34–37 (TGTT), and 54–55 (SG). Asp60 acts as the Proton donor/acceptor in catalysis. His87 provides a ligand contact to substrate.

It belongs to the methylglyoxal synthase family.

The catalysed reaction is dihydroxyacetone phosphate = methylglyoxal + phosphate. Functionally, catalyzes the formation of methylglyoxal from dihydroxyacetone phosphate. The chain is Methylglyoxal synthase from Clostridium botulinum (strain Alaska E43 / Type E3).